The sequence spans 991 residues: Pro-apoptotic serine protease NMA111 (991 aa).

Residues 1–57 form a disordered region; the sequence is MTVGKRKLSNGTVNEAKRLDDHVPVVAPSTNPDFENANGEDNEDIDDYSSEGEMSPQ. Residues 38-50 are compositionally biased toward acidic residues; the sequence is NGEDNEDIDDYSS. Residues 86 to 269 form a serine protease region; that stretch reads HVSNFDTESS…LPVYRPLRAL (184 aa). Residues H117, D148, and S231 each act as charge relay system in the active site. 2 consecutive PDZ domains span residues 296–374 and 885–957; these read RRLG…QRNG and PHHG…VSFD.

This sequence belongs to the peptidase S1C family.

It is found in the nucleus. Its function is as follows. Nuclear serine protease which mediates apoptosis. This Meyerozyma guilliermondii (strain ATCC 6260 / CBS 566 / DSM 6381 / JCM 1539 / NBRC 10279 / NRRL Y-324) (Yeast) protein is Pro-apoptotic serine protease NMA111 (NMA111).